We begin with the raw amino-acid sequence, 383 residues long: Serpin B5 (383 aa).

N-linked (GlcNAc...) asparagine glycans are attached at residues Asn106, Asn133, Asn176, and Asn361.

This sequence belongs to the serpin family. Ov-serpin subfamily.

Its subcellular location is the secreted. It is found in the extracellular space. Its function is as follows. May not exhibit serine protease inhibitory activity. This Xenopus laevis (African clawed frog) protein is Serpin B5 (serpinb5).